Here is a 119-residue protein sequence, read N- to C-terminus: Protein phosphatase EYA1 (119 aa).

This sequence belongs to the HAD-like hydrolase superfamily. EYA family. Mg(2+) serves as cofactor.

It is found in the cytoplasm. The protein resides in the nucleus. The catalysed reaction is O-phospho-L-tyrosyl-[protein] + H2O = L-tyrosyl-[protein] + phosphate. It catalyses the reaction O-phospho-L-seryl-[protein] + H2O = L-seryl-[protein] + phosphate. It carries out the reaction O-phospho-L-threonyl-[protein] + H2O = L-threonyl-[protein] + phosphate. Functions both as protein phosphatase and as transcriptional coactivator for SIX1, and probably also for other transcription factors of this family. Tyrosine phosphatase that dephosphorylates 'Tyr-142' of histone H2AX (H2AXY142ph) and promotes efficient DNA repair via the recruitment of DNA repair complexes containing MDC1. 'Tyr-142' phosphorylation of histone H2AX plays a central role in DNA repair and acts as a mark that distinguishes between apoptotic and repair responses to genotoxic stress. Its function as histone phosphatase may contribute to its function in transcription regulation during organogenesis. Also has phosphatase activity with proteins phosphorylated on Ser and Thr residues (in vitro). Required for normal embryonic development of the skeleton, kidneys and ears. This chain is Protein phosphatase EYA1 (EYA1), found in Gallus gallus (Chicken).